We begin with the raw amino-acid sequence, 258 residues long: 4-oxalmesaconate hydratase (258 aa).

Zn(2+) is bound by residues H28, D31, and H141.

It belongs to the MshB deacetylase family. Zn(2+) is required as a cofactor.

It catalyses the reaction 2-hydroxy-4-oxobutane-1,2,4-tricarboxylate = 4-carboxy-2-hydroxy-cis,cis-muconate + H2O. Its function is as follows. Catalyzes the conversion of oxalomesaconic acid enol (OMAenol) to 4-carboxy-4-hydroxy-2-oxoadipic acid (CHA). Mediates the third step of gallate degradation pathway. This Pseudomonas putida (strain ATCC 47054 / DSM 6125 / CFBP 8728 / NCIMB 11950 / KT2440) protein is 4-oxalmesaconate hydratase (galB).